A 250-amino-acid chain; its full sequence is Phosphoribosylaminoimidazole-succinocarboxamide synthase (250 aa).

This sequence belongs to the SAICAR synthetase family.

It catalyses the reaction 5-amino-1-(5-phospho-D-ribosyl)imidazole-4-carboxylate + L-aspartate + ATP = (2S)-2-[5-amino-1-(5-phospho-beta-D-ribosyl)imidazole-4-carboxamido]succinate + ADP + phosphate + 2 H(+). It participates in purine metabolism; IMP biosynthesis via de novo pathway; 5-amino-1-(5-phospho-D-ribosyl)imidazole-4-carboxamide from 5-amino-1-(5-phospho-D-ribosyl)imidazole-4-carboxylate: step 1/2. The sequence is that of Phosphoribosylaminoimidazole-succinocarboxamide synthase from Chloroflexus aggregans (strain MD-66 / DSM 9485).